The following is a 209-amino-acid chain: Kynurenine formamidase (209 aa).

Trp20 serves as a coordination point for substrate. His50, His54, and Asp56 together coordinate Zn(2+). His60 (proton donor/acceptor) is an active-site residue. His161 and Glu173 together coordinate Zn(2+).

Belongs to the Cyclase 1 superfamily. KynB family. In terms of assembly, homodimer. Zn(2+) is required as a cofactor.

The enzyme catalyses N-formyl-L-kynurenine + H2O = L-kynurenine + formate + H(+). Its pathway is amino-acid degradation; L-tryptophan degradation via kynurenine pathway; L-kynurenine from L-tryptophan: step 2/2. Catalyzes the hydrolysis of N-formyl-L-kynurenine to L-kynurenine, the second step in the kynurenine pathway of tryptophan degradation. The protein is Kynurenine formamidase of Bacillus cytotoxicus (strain DSM 22905 / CIP 110041 / 391-98 / NVH 391-98).